Reading from the N-terminus, the 400-residue chain is Lipase member N (400 aa).

The first 19 residues, 1–19, serve as a signal peptide directing secretion; that stretch reads MPMMWLFLTTACLIPGTLS. The 301-residue stretch at 81–381 folds into the AB hydrolase-1 domain; it reads PVVYMQHALF…DWNHFDFVWG (301 aa). Residue Ser175 is the Nucleophile of the active site. An intrachain disulfide couples Cys249 to Cys258. A glycan (N-linked (GlcNAc...) asparagine) is linked at Asn274. Residues Asp346 and His375 each act as charge relay system in the active site.

Belongs to the AB hydrolase superfamily. Lipase family. Highly expressed in the epidermis. Also detected in other tissues, although at much lower levels, including liver and kidney.

It is found in the secreted. It carries out the reaction a sterol ester + H2O = a sterol + a fatty acid + H(+). It catalyses the reaction a triacylglycerol + H2O = a 1,2-diacylglycerol + a fatty acid + H(+). The enzyme catalyses a triacylglycerol + H2O = a diacylglycerol + a fatty acid + H(+). The catalysed reaction is a cholesterol ester + H2O = cholesterol + a fatty acid + H(+). Its function is as follows. Plays a highly specific role in the last step of keratinocyte differentiation. Contains two distinct domains: the alpha/beta hydrolase fold and the abhydrolase-associated lipase region, also features the consensus sequence of the active site of a genuine lipase. May have an essential function in lipid metabolism of the most differentiated epidermal layers. This chain is Lipase member N (Lipn), found in Mus musculus (Mouse).